We begin with the raw amino-acid sequence, 192 residues long: dTTP/UTP pyrophosphatase (192 aa).

Asp68 serves as the catalytic Proton acceptor.

Belongs to the Maf family. YhdE subfamily. The cofactor is a divalent metal cation.

Its subcellular location is the cytoplasm. It carries out the reaction dTTP + H2O = dTMP + diphosphate + H(+). The enzyme catalyses UTP + H2O = UMP + diphosphate + H(+). In terms of biological role, nucleoside triphosphate pyrophosphatase that hydrolyzes dTTP and UTP. May have a dual role in cell division arrest and in preventing the incorporation of modified nucleotides into cellular nucleic acids. This is dTTP/UTP pyrophosphatase from Cereibacter sphaeroides (strain ATCC 17023 / DSM 158 / JCM 6121 / CCUG 31486 / LMG 2827 / NBRC 12203 / NCIMB 8253 / ATH 2.4.1.) (Rhodobacter sphaeroides).